A 251-amino-acid polypeptide reads, in one-letter code: Hydroxyacylglutathione hydrolase (251 aa).

Residues His-53, His-55, Asp-57, His-58, His-110, Asp-127, and His-165 each contribute to the Zn(2+) site.

Belongs to the metallo-beta-lactamase superfamily. Glyoxalase II family. As to quaternary structure, monomer. Zn(2+) is required as a cofactor.

The catalysed reaction is an S-(2-hydroxyacyl)glutathione + H2O = a 2-hydroxy carboxylate + glutathione + H(+). It functions in the pathway secondary metabolite metabolism; methylglyoxal degradation; (R)-lactate from methylglyoxal: step 2/2. Functionally, thiolesterase that catalyzes the hydrolysis of S-D-lactoyl-glutathione to form glutathione and D-lactic acid. The sequence is that of Hydroxyacylglutathione hydrolase from Citrobacter koseri (strain ATCC BAA-895 / CDC 4225-83 / SGSC4696).